A 203-amino-acid polypeptide reads, in one-letter code: Peptidyl-tRNA hydrolase (203 aa).

Residue Tyr14 participates in tRNA binding. Catalysis depends on His19, which acts as the Proton acceptor. Residues Tyr64, Asn66, and Asn112 each contribute to the tRNA site.

This sequence belongs to the PTH family. As to quaternary structure, monomer.

It localises to the cytoplasm. It catalyses the reaction an N-acyl-L-alpha-aminoacyl-tRNA + H2O = an N-acyl-L-amino acid + a tRNA + H(+). Hydrolyzes ribosome-free peptidyl-tRNAs (with 1 or more amino acids incorporated), which drop off the ribosome during protein synthesis, or as a result of ribosome stalling. Functionally, catalyzes the release of premature peptidyl moieties from peptidyl-tRNA molecules trapped in stalled 50S ribosomal subunits, and thus maintains levels of free tRNAs and 50S ribosomes. The polypeptide is Peptidyl-tRNA hydrolase (Methylobacterium sp. (strain 4-46)).